Reading from the N-terminus, the 106-residue chain is Iron-sulfur cluster assembly protein CyaY (106 aa).

Belongs to the frataxin family.

Its function is as follows. Involved in iron-sulfur (Fe-S) cluster assembly. May act as a regulator of Fe-S biogenesis. In Serratia proteamaculans (strain 568), this protein is Iron-sulfur cluster assembly protein CyaY.